A 180-amino-acid polypeptide reads, in one-letter code: SPbeta prophage-derived uncharacterized protein YosC (180 aa).

This Bacillus subtilis (strain 168) protein is SPbeta prophage-derived uncharacterized protein YosC (yosC).